Consider the following 87-residue polypeptide: MRHKPTPPKGNKSLGNALASKKKVSKNQVVFFDYRDERKLKRFINDQGKIIPRRITGLSAKEQNLLTHSVKWARFLAVIPYVTDEYK.

Residues 1-21 (MRHKPTPPKGNKSLGNALASK) are disordered.

This sequence belongs to the bacterial ribosomal protein bS18 family. As to quaternary structure, part of the 30S ribosomal subunit. Forms a tight heterodimer with protein bS6.

In terms of biological role, binds as a heterodimer with protein bS6 to the central domain of the 16S rRNA, where it helps stabilize the platform of the 30S subunit. The chain is Small ribosomal subunit protein bS18 from Chlorobium phaeobacteroides (strain DSM 266 / SMG 266 / 2430).